Consider the following 280-residue polypeptide: Divalent cation/proton antiporter GDT1 (280 aa).

Topologically, residues 1–3 (MGN) are cytoplasmic. The helical transmembrane segment at 4–24 (MIKKASLIALLPLFTAAAAAA) threads the bilayer. Topologically, residues 25–45 (TDAETSMESGSSSHLKSFLMS) are vacuolar. A helical membrane pass occupies residues 46 to 66 (VSMIGLSEIGDKTFLIAALMA). Residues 67–71 (MRHKR) are Cytoplasmic-facing. A helical membrane pass occupies residues 72–92 (VLVFSAAATSLAIMTILSGVV). Residues 93-104 (GHSAVAFLSERY) lie on the Vacuolar side of the membrane. Residues 105–125 (TAFFAGILFLVFGYKLTMEGL) traverse the membrane as a helical segment. Residues 126 to 183 (EMSKDAGVEEEMAEVEEEIAIKDMNQDMDDVEKGGDTAYDKQLKNASIGKKIVHRIRE) lie on the Cytoplasmic side of the membrane. The helical transmembrane segment at 184 to 204 (LASFMFSPVWVQIFLMVFLGE) threads the bilayer. The Vacuolar portion of the chain corresponds to 205–222 (LGDRSQISIIAMATDSDY). Residues 223–243 (WYVIAGAVIGHAICSGLAVVG) form a helical membrane-spanning segment. At 244-255 (GKLLATRISIRT) the chain is on the cytoplasmic side. The helical transmembrane segment at 256–276 (ITLASSLLFFIFALMYIYQAF) threads the bilayer. Over 277 to 280 (TTQD) the chain is Vacuolar.

Belongs to the GDT1 family.

It localises to the golgi apparatus. The protein resides in the cis-Golgi network membrane. The enzyme catalyses Ca(2+)(in) + n H(+)(out) = Ca(2+)(out) + n H(+)(in). It carries out the reaction Mn(2+)(in) + n H(+)(out) = Mn(2+)(out) + n H(+)(in). Divalent cation:proton antiporter that exchanges calcium or manganese ions for protons across the Golgi membrane. Mediates the reversible transport of calcium or manganese to the Golgi lumen driven by the proton gradient and possibly the membrane potential generated by V-ATPase. Provides calcium or manganese cofactors to resident Golgi enzymes and contributes to the maintenance of an acidic luminal Golgi pH required for proper functioning of the secretory pathway. The transport stoichiometry remains to be elucidated. The sequence is that of Divalent cation/proton antiporter GDT1 from Saccharomyces cerevisiae (strain ATCC 204508 / S288c) (Baker's yeast).